Reading from the N-terminus, the 591-residue chain is Metalloendopeptidase OPG085 (591 aa).

His-41 contributes to the Zn(2+) binding site. Glu-44 is a catalytic residue. Residue His-45 coordinates Zn(2+).

The protein belongs to the peptidase M44 family. Zn(2+) serves as cofactor. Undergoes proteolytic processing during the course of infection. May be cleaved into 46 kDa and 22 kDa products (Potential).

The protein resides in the virion. Probably involved in maturation of some viral proteins by processing them preferentially at Ala-Gly-|-Ser/Thr/Lys motifs. Does not seem to be responsible for the cleavage of major core proteins. This is Metalloendopeptidase OPG085 (OPG085) from Homo sapiens (Human).